The sequence spans 250 residues: 1-(5-phosphoribosyl)-5-[(5-phosphoribosylamino)methylideneamino] imidazole-4-carboxamide isomerase (250 aa).

The active-site Proton acceptor is D10. D131 functions as the Proton donor in the catalytic mechanism.

The protein belongs to the HisA/HisF family.

Its subcellular location is the cytoplasm. The enzyme catalyses 1-(5-phospho-beta-D-ribosyl)-5-[(5-phospho-beta-D-ribosylamino)methylideneamino]imidazole-4-carboxamide = 5-[(5-phospho-1-deoxy-D-ribulos-1-ylimino)methylamino]-1-(5-phospho-beta-D-ribosyl)imidazole-4-carboxamide. The protein operates within amino-acid biosynthesis; L-histidine biosynthesis; L-histidine from 5-phospho-alpha-D-ribose 1-diphosphate: step 4/9. The chain is 1-(5-phosphoribosyl)-5-[(5-phosphoribosylamino)methylideneamino] imidazole-4-carboxamide isomerase from Desulfitobacterium hafniense (strain DSM 10664 / DCB-2).